Consider the following 202-residue polypeptide: Large ribosomal subunit protein uL13 (202 aa).

Belongs to the universal ribosomal protein uL13 family. Component of the large ribosomal subunit (LSU). Mature N.crassa ribosomes consist of a small (40S) and a large (60S) subunit. The 40S small subunit contains 1 molecule of ribosomal RNA (18S rRNA) and at least 32 different proteins. The large 60S subunit contains 3 rRNA molecules (26S, 5.8S and 5S rRNA) and at least 42 different proteins.

The protein resides in the cytoplasm. Component of the ribosome, a large ribonucleoprotein complex responsible for the synthesis of proteins in the cell. The small ribosomal subunit (SSU) binds messenger RNAs (mRNAs) and translates the encoded message by selecting cognate aminoacyl-transfer RNA (tRNA) molecules. The large subunit (LSU) contains the ribosomal catalytic site termed the peptidyl transferase center (PTC), which catalyzes the formation of peptide bonds, thereby polymerizing the amino acids delivered by tRNAs into a polypeptide chain. The nascent polypeptides leave the ribosome through a tunnel in the LSU and interact with protein factors that function in enzymatic processing, targeting, and the membrane insertion of nascent chains at the exit of the ribosomal tunnel. This Neurospora crassa (strain ATCC 24698 / 74-OR23-1A / CBS 708.71 / DSM 1257 / FGSC 987) protein is Large ribosomal subunit protein uL13 (crp-46).